A 573-amino-acid polypeptide reads, in one-letter code: uncharacterized protein (573 aa).

Residues 15–298 (AGIALILMLT…FPFLIMIFTR (284 aa)) form the ABC transmembrane type-1 domain. Transmembrane regions (helical) follow at residues 17–37 (IALILMLTELAVELMQPLLIA), 52–72 (VWIWGTVMIGLTVLSFAAGML), 127–147 (IFMSLRFMLRAPLMIAGGIVL), 153–173 (VKLGFFLLVTIPILILFLLWV), 238–258 (FTMPVLMLLMNLCILLILWAG), and 275–295 (IINYATRITGALSMFPFLIMI). Positions 330 to 563 (IEFQHVSFRY…SQLYKRIYES (234 aa)) constitute an ABC transporter domain. ATP is bound at residue 364–371 (GATGSGKS).

The protein belongs to the ABC transporter superfamily.

The protein resides in the cell membrane. This is an uncharacterized protein from Bacillus subtilis (strain 168).